The following is a 211-amino-acid chain: Thymidylate kinase (211 aa).

Residue 10–17 (GGDGVGKS) participates in ATP binding.

It belongs to the thymidylate kinase family.

It carries out the reaction dTMP + ATP = dTDP + ADP. Its function is as follows. Phosphorylation of dTMP to form dTDP in both de novo and salvage pathways of dTTP synthesis. This is Thymidylate kinase from Clavibacter michiganensis subsp. michiganensis (strain NCPPB 382).